The primary structure comprises 1022 residues: Sodium-dependent transporter snf-12 (1022 aa).

Over 1–165 (MNGEWKSALR…RRELWRTQKD (165 aa)) the chain is Cytoplasmic. The chain crosses the membrane as a helical span at residues 166-185 (FFLSCLGFMVGVGHTMRFPA). At 186-192 (KVYQHGG) the chain is on the extracellular side. The helical transmembrane segment at 193 to 213 (GVFFIPYLFSLIFFGLPLVFL) threads the bilayer. Topologically, residues 214 to 241 (HLSLGQYTGQAANTAFQRLMPIGSGVGW) are cytoplasmic. Residues 242–262 (ALVVIAIPVAVYYNIIVAWAI) traverse the membrane as a helical segment. The Extracellular portion of the chain corresponds to 263-337 (HYFFQSAKGL…DFALGPLQSH (75 aa)). The chain crosses the membrane as a helical span at residues 338–358 (LVLSLAAAWLLVFFGVFKGLG). Position 359 (Ser-359) is a topological domain, cytoplasmic. The helical transmembrane segment at 360–380 (IAQTMNVTATVPYLLLSILLL) threads the bilayer. The Extracellular portion of the chain corresponds to 381-412 (RGISLPGANKGLTFLFTVDSTKLWKWQIWKSA). A helical transmembrane segment spans residues 413 to 433 (AEQVFYELGIDAGPLISMAAF). Residues 434–444 (SRYRNNIYRDS) lie on the Cytoplasmic side of the membrane. The chain crosses the membrane as a helical span at residues 445–465 (VLLVIMDALTSCLSGMVIFSF). At 466-498 (VGFIASESNSNVNDVLKHDPLYLSFTVYPGVTS) the chain is on the extracellular side. A helical transmembrane segment spans residues 499–519 (FMYWGGLWATLFFGMLVLAAI). Residues 520 to 550 (DAEFAWLEMIASAFMNHFSMKNKAVENRLLA) are Cytoplasmic-facing. A helical membrane pass occupies residues 551-571 (FLCLAGFFLGLPLCAQGGIFV). Topologically, residues 572–584 (FHAIENLNANWNS) are extracellular. A helical transmembrane segment spans residues 585-605 (FSLALLSVAIVCYVYGIDNYL). Residues 606-641 (TDISAMLRVPRIQISKATRLKEKLIYFFGPGGIYIK) are Cytoplasmic-facing. A helical transmembrane segment spans residues 642–662 (FSLCFICPVILTVLLVASVLG). Topologically, residues 663-677 (YQRISFAGRPIPIDY) are extracellular. The chain crosses the membrane as a helical span at residues 678 to 698 (EIVAWIVMIGPLLVVPLVAFM). Over 699 to 1022 (QIRQIRNEGK…RPKPIDMPPK (324 aa)) the chain is Cytoplasmic. Disordered stretches follow at residues 867 to 948 (RIPN…SSDD) and 995 to 1022 (IYDQ…MPPK). A compositionally biased stretch (pro residues) spans 893 to 907 (SDPPVPTSPLPPPPK). Over residues 933 to 943 (DDSPSISNSSD) the composition is skewed to low complexity.

It belongs to the sodium:neurotransmitter symporter (SNF) (TC 2.A.22) family. As to quaternary structure, may interact with STAT family transcription factor sta-2; the interaction is probably direct.

It localises to the membrane. It is found in the cytoplasm. The protein localises to the vesicle. Functionally, probably mediates sodium-dependent uptake of unknown small molecule(s). By positively modulating expression, in the epidermis, of antimicrobial peptides such as nlp-29, plays a role in resistance to fungal infection and in the response to physical wounding and phorbol ester PMA treatment. Role in response to wounding of the epidermis may be facilitated by recruitment of snf-12 to the wound site by microtubule-dependent vesicle trafficking. Functions cell autonomously in the epidermis, in concert with STAT transcription factor sta-2, probably acting at vesicular membranes, downstream of a p38 MAPK/pmk-1 pathway. This is Sodium-dependent transporter snf-12 from Caenorhabditis elegans.